An 88-amino-acid polypeptide reads, in one-letter code: MSEAIENRNGRALVGVVVSDKNDKTIVVRVETLVKHPLLKKYIRRRKKFTAHDPNNECKVGDKVKIIEFRPVSRNKRWHLVSILEKAV.

Belongs to the universal ribosomal protein uS17 family. As to quaternary structure, part of the 30S ribosomal subunit.

In terms of biological role, one of the primary rRNA binding proteins, it binds specifically to the 5'-end of 16S ribosomal RNA. This chain is Small ribosomal subunit protein uS17, found in Oleidesulfovibrio alaskensis (strain ATCC BAA-1058 / DSM 17464 / G20) (Desulfovibrio alaskensis).